We begin with the raw amino-acid sequence, 245 residues long: 1-(5-phosphoribosyl)-5-[(5-phosphoribosylamino)methylideneamino] imidazole-4-carboxamide isomerase (245 aa).

Asp-7 acts as the Proton acceptor in catalysis. Asp-129 acts as the Proton donor in catalysis.

It belongs to the HisA/HisF family.

The protein resides in the cytoplasm. The enzyme catalyses 1-(5-phospho-beta-D-ribosyl)-5-[(5-phospho-beta-D-ribosylamino)methylideneamino]imidazole-4-carboxamide = 5-[(5-phospho-1-deoxy-D-ribulos-1-ylimino)methylamino]-1-(5-phospho-beta-D-ribosyl)imidazole-4-carboxamide. It functions in the pathway amino-acid biosynthesis; L-histidine biosynthesis; L-histidine from 5-phospho-alpha-D-ribose 1-diphosphate: step 4/9. This chain is 1-(5-phosphoribosyl)-5-[(5-phosphoribosylamino)methylideneamino] imidazole-4-carboxamide isomerase, found in Cronobacter sakazakii (strain ATCC BAA-894) (Enterobacter sakazakii).